We begin with the raw amino-acid sequence, 259 residues long: Peroxiredoxin-4 (259 aa).

A Thioredoxin domain is found at Ile-66–Phe-224. Cys-111 functions as the Cysteine sulfenic acid (-SOH) intermediate in the catalytic mechanism.

Belongs to the peroxiredoxin family. AhpC/Prx1 subfamily. As to quaternary structure, homodimer; disulfide-linked, upon oxidation. 5 homodimers assemble to form a ring-like decamer.

It localises to the cytoplasm. The protein localises to the endoplasmic reticulum. The catalysed reaction is a hydroperoxide + [thioredoxin]-dithiol = an alcohol + [thioredoxin]-disulfide + H2O. Thiol-specific peroxidase that catalyzes the reduction of hydrogen peroxide and organic hydroperoxides to water and alcohols, respectively. Plays a role in cell protection against oxidative stress by detoxifying peroxides and as sensor of hydrogen peroxide-mediated signaling events. Regulates the activation of NF-kappa-B in the cytosol by a modulation of I-kappa-B-alpha phosphorylation. The polypeptide is Peroxiredoxin-4 (prdx4) (Dictyostelium discoideum (Social amoeba)).